Consider the following 432-residue polypeptide: Fibroleukin (432 aa).

The first 19 residues, methionine 1–alanine 19, serve as a signal peptide directing secretion. An N-linked (GlcNAc...) asparagine glycan is attached at asparagine 24. A coiled-coil region spans residues glycine 71 to valine 157. The tract at residues glutamine 100–arginine 122 is disordered. 4 N-linked (GlcNAc...) asparagine glycosylation sites follow: asparagine 172, asparagine 228, asparagine 256, and asparagine 329. Residues proline 197 to asparagine 429 enclose the Fibrinogen C-terminal domain. An intrachain disulfide couples cysteine 206 to cysteine 235. A disulfide bridge connects residues cysteine 364 and cysteine 377.

As to quaternary structure, homotetramer; disulfide-linked. Constitutively expressed in cytotoxic T-cells.

Its subcellular location is the secreted. Converts prothrombin to thrombin. The protein is Fibroleukin (Fgl2) of Mus musculus (Mouse).